Reading from the N-terminus, the 245-residue chain is tRNA (guanine-N(7)-)-methyltransferase (245 aa).

S-adenosyl-L-methionine contacts are provided by Glu-75, Glu-100, Asp-127, and Asp-150. The active site involves Asp-150. Residues Lys-154, Asp-186, and 223–226 (TKFE) each bind substrate.

This sequence belongs to the class I-like SAM-binding methyltransferase superfamily. TrmB family.

The enzyme catalyses guanosine(46) in tRNA + S-adenosyl-L-methionine = N(7)-methylguanosine(46) in tRNA + S-adenosyl-L-homocysteine. It participates in tRNA modification; N(7)-methylguanine-tRNA biosynthesis. In terms of biological role, catalyzes the formation of N(7)-methylguanine at position 46 (m7G46) in tRNA. In Photobacterium profundum (strain SS9), this protein is tRNA (guanine-N(7)-)-methyltransferase.